Consider the following 236-residue polypeptide: MLTRKQFELLKFINERLKEAGVPPSFDEMKDALDLRSKSGIHRLITALEERGFIRRLPNRARAIEVIKLPDTGGMPGNSRRGFTPSVIEGNLGKVRPPSPTPAEDDHDRGSVAVPVMGRIAAGTPIEALQSRSHTISVPADMLGSGEHYALEVRGDSMVEAGILDGDMALIQKNDVADTGDIVVALIDEEEATLKRFRRRGASIALEPANAAYEVRILPPNRVRIQGKLIGLYRKY.

A DNA-binding region (H-T-H motif) is located at residues 26–46 (FDEMKDALDLRSKSGIHRLIT). Residues 85–109 (PSVIEGNLGKVRPPSPTPAEDDHDR) form a disordered region. Active-site for autocatalytic cleavage activity residues include Ser157 and Lys195.

It belongs to the peptidase S24 family. In terms of assembly, homodimer.

It catalyses the reaction Hydrolysis of Ala-|-Gly bond in repressor LexA.. Represses a number of genes involved in the response to DNA damage (SOS response), including recA and lexA. In the presence of single-stranded DNA, RecA interacts with LexA causing an autocatalytic cleavage which disrupts the DNA-binding part of LexA, leading to derepression of the SOS regulon and eventually DNA repair. This is LexA repressor from Rhodopseudomonas palustris (strain ATCC BAA-98 / CGA009).